The sequence spans 710 residues: Iron-sulfur clusters transporter ATM1, mitochondrial (710 aa).

A mitochondrion-targeting transit peptide spans 1–38 (MWLSLPRSGYGSVATLTSKRVLACLTPLRQFSTSPAVS). The segment covering 35-52 (PAVSNANHKNVDNINKSP) has biased composition (polar residues). Positions 35 to 83 (PAVSNANHKNVDNINKSPANDAANNAVEKGDKPTTSPEKLATKAEKSSA) are disordered. Residues 39–129 (NANHKNVDNI…PKGKTSVKFR (91 aa)) are Mitochondrial matrix-facing. The chain crosses the membrane as a helical span at residues 130–151 (VLVAVALLVGAKLLNVQVPFFF). Residues 130–419 (VLVAVALLVG…LGSVYRDLRQ (290 aa)) form the ABC transmembrane type-1 domain. The Mitochondrial intermembrane segment spans residues 152–173 (KEIIDDMNIEWNSATALGVGIT). Residues 174–197 (ALIFSYGAARFGAVLFGELRNAIF) form a helical membrane-spanning segment. Over 198–246 (ASVAQKAIKEVATNVFRHLLKLDMAFHLSRQTGGITRAIDRGTKGISFV) the chain is Mitochondrial matrix. The chain crosses the membrane as a helical span at residues 247-270 (LSSMVFHIIPIALEISLVCGILSY). A topological domain (mitochondrial intermembrane) is located at residue Asn271. The chain crosses the membrane as a helical span at residues 272–292 (FGWKYALVTGATMVSYAIFTI). The Mitochondrial matrix portion of the chain corresponds to 293–358 (TTTSWRTKFR…ASIKIATSLA (66 aa)). Residues 298 to 302 (RTKFR) and 361 to 364 (NSGQ) each bind glutathione. A helical membrane pass occupies residues 359–377 (FLNSGQNLIFSSALTAMMY). Residues 378 to 392 (MTCCGVADGSLTVGD) lie on the Mitochondrial intermembrane side of the membrane. The helical transmembrane segment at 393–414 (LVLVNQLVFQLSVPLNFLGSVY) threads the bilayer. Gly411 contributes to the glutathione binding site. Topologically, residues 415 to 710 (RDLRQSLLDM…AEEKAAKKDV (296 aa)) are mitochondrial matrix. An ABC transporter domain is found at 453–687 (IRFENVTYGY…DGLYKSMWDA (235 aa)). ATP is bound by residues Tyr462 and 486–497 (GPSGSGKSTILK).

This sequence belongs to the ABC transporter superfamily. ABCB family. Heavy Metal importer (TC 3.A.1.210) subfamily. As to quaternary structure, homodimer.

The protein localises to the mitochondrion inner membrane. Functionally, performs an essential function in the generation of cytoplasmic iron-sulfur proteins by mediating the ATP-dependent export of Fe/S cluster precursors synthesized by NFS1 and other mitochondrial proteins. Hydrolyzes ATP. Binds glutathione and may function by transporting a glutathione-conjugated iron-sulfur compound. In Yarrowia lipolytica (strain CLIB 122 / E 150) (Yeast), this protein is Iron-sulfur clusters transporter ATM1, mitochondrial.